The chain runs to 210 residues: Large ribosomal subunit protein uL3 (210 aa).

Residues 136–156 (THGTEKAHRSGGSIGNNTEPG) form a disordered region.

It belongs to the universal ribosomal protein uL3 family. As to quaternary structure, part of the 50S ribosomal subunit. Forms a cluster with proteins L14 and L19.

Functionally, one of the primary rRNA binding proteins, it binds directly near the 3'-end of the 23S rRNA, where it nucleates assembly of the 50S subunit. In Solidesulfovibrio magneticus (strain ATCC 700980 / DSM 13731 / RS-1) (Desulfovibrio magneticus), this protein is Large ribosomal subunit protein uL3.